The primary structure comprises 642 residues: tRNA uridine 5-carboxymethylaminomethyl modification enzyme MnmG (642 aa).

FAD-binding positions include 12–17, Val-124, and Ser-179; that span reads GAGHAG. An NAD(+)-binding site is contributed by 272 to 286; sequence GPRYCPSIEDKITRF. Gln-369 contacts FAD.

Belongs to the MnmG family. As to quaternary structure, homodimer. Heterotetramer of two MnmE and two MnmG subunits. Requires FAD as cofactor.

It localises to the cytoplasm. Functionally, NAD-binding protein involved in the addition of a carboxymethylaminomethyl (cmnm) group at the wobble position (U34) of certain tRNAs, forming tRNA-cmnm(5)s(2)U34. The polypeptide is tRNA uridine 5-carboxymethylaminomethyl modification enzyme MnmG (Bdellovibrio bacteriovorus (strain ATCC 15356 / DSM 50701 / NCIMB 9529 / HD100)).